The primary structure comprises 162 residues: Protein NrdI (162 aa).

Belongs to the NrdI family.

Its function is as follows. Probably involved in ribonucleotide reductase function. The polypeptide is Protein NrdI (Streptococcus pyogenes serotype M1).